Consider the following 423-residue polypeptide: Glutamate-1-semialdehyde 2,1-aminomutase (423 aa).

Lysine 263 is modified (N6-(pyridoxal phosphate)lysine).

The protein belongs to the class-III pyridoxal-phosphate-dependent aminotransferase family. HemL subfamily. Requires pyridoxal 5'-phosphate as cofactor.

The protein localises to the cytoplasm. The enzyme catalyses (S)-4-amino-5-oxopentanoate = 5-aminolevulinate. The protein operates within porphyrin-containing compound metabolism; protoporphyrin-IX biosynthesis; 5-aminolevulinate from L-glutamyl-tRNA(Glu): step 2/2. This Ignicoccus hospitalis (strain KIN4/I / DSM 18386 / JCM 14125) protein is Glutamate-1-semialdehyde 2,1-aminomutase.